A 300-amino-acid polypeptide reads, in one-letter code: Protein orai (300 aa).

Residues 1 to 128 (MPRSHDPSRV…SKAQLKASSR (128 aa)) are Cytoplasmic-facing. The tract at residues 58–82 (QPPSSGGGSRNVGGGDGAAGNSKNG) is disordered. A compositionally biased stretch (gly residues) spans 62–75 (SGGGSRNVGGGDGA). A helical membrane pass occupies residues 129–146 (TSALLAGFAMVCLVELQY). At 147-153 (DDSTSKP) the chain is on the extracellular side. Residues 154–174 (LLIVLGVVTSLLVSVHLLALM) traverse the membrane as a helical segment. The Cytoplasmic segment spans residues 175–205 (MSTCILPYMEATGCTQDSPHLKLKFYIDLSW). A helical transmembrane segment spans residues 206–226 (LFSTCIGLLLFLVEIGVIFYV). Residues 227 to 237 (KFTAVGYPTAG) are Extracellular-facing. The helical transmembrane segment at 238–258 (YITTAMLIPVGIVFVLFSYLI) threads the bilayer. Over 259–300 (HKNRVSHSLGRFKDKVDTMKQFLDVEANLQKSTIAPSTIRDI) the chain is Cytoplasmic.

This sequence belongs to the Orai family.

The protein resides in the membrane. Functionally, ca(2+) release-activated Ca(2+)-like (CRAC-like) channel subunit which mediates Ca(2+) influx and increase in Ca(2+)-selective current by synergy with the Ca(2+) sensor, stim-1. Required for Ca(2+) and IP3-dependent contractile activity of sheath cells and the spermatheca. Affects brood size and somatic cell function. The protein is Protein orai (orai-1) of Caenorhabditis briggsae.